The chain runs to 660 residues: DNA ligase (660 aa).

NAD(+) is bound by residues 31–35 (DKEYD), 79–80 (SL), and Glu-111. The N6-AMP-lysine intermediate role is filled by Lys-113. Positions 134, 168, 280, and 304 each coordinate NAD(+). Cys-397, Cys-400, Cys-413, and Cys-419 together coordinate Zn(2+). In terms of domain architecture, BRCT spans 577–660 (RQESIFSGKT…LDEAAFEALL (84 aa)).

It belongs to the NAD-dependent DNA ligase family. LigA subfamily. It depends on Mg(2+) as a cofactor. Requires Mn(2+) as cofactor.

The catalysed reaction is NAD(+) + (deoxyribonucleotide)n-3'-hydroxyl + 5'-phospho-(deoxyribonucleotide)m = (deoxyribonucleotide)n+m + AMP + beta-nicotinamide D-nucleotide.. Its function is as follows. DNA ligase that catalyzes the formation of phosphodiester linkages between 5'-phosphoryl and 3'-hydroxyl groups in double-stranded DNA using NAD as a coenzyme and as the energy source for the reaction. It is essential for DNA replication and repair of damaged DNA. The chain is DNA ligase from Alkaliphilus metalliredigens (strain QYMF).